Consider the following 369-residue polypeptide: MADSVPGHVAGGGLQGFSVDAECIKQRVDEVLQWVDSLEHKLKEVEEFYSSIGVSNSGSIGKDTEKGRHVVGIRKIQQEAARREAVAAKRMQDLMRQFGTIFRQITQHKCAWPFMHPVNVEGLGLHDYFEVIDKPMDFSTIKNQMEAKDGTGYKHVMQIYADMRLVFENAMNYNEETSDVYSMAKKLLEKFEEKWAHFLPKVQEEEKIREEEEKQAAKEALLAKEASHIKTTRELGNEICHANDELEKLMRKVVERCRKITIEEKRNIGLALLKLSPDDLQKVLGIVAQANPSFQPRAEEVSIEMDILDEPTLWRLKFFVKDALDNAMKKKKEEETKTRELSGAQKKEVSKKRNATTKLAERKTKRSRI.

One can recognise a Bromo domain in the interval 89–198 (KRMQDLMRQF…EKFEEKWAHF (110 aa)). Positions 201-263 (KVQEEEKIRE…VERCRKITIE (63 aa)) form a coiled coil. The NET domain occupies 250–331 (MRKVVERCRK…DALDNAMKKK (82 aa)). Over residues 329-348 (KKKKEEETKTRELSGAQKKE) the composition is skewed to basic and acidic residues. The tract at residues 329 to 369 (KKKKEEETKTRELSGAQKKEVSKKRNATTKLAERKTKRSRI) is disordered. Residues 351–368 (KKRNATTKLAERKTKRSR) carry the Bipartite nuclear localization signal motif.

In terms of tissue distribution, abundantly expressed in flowers. Weakly expressed in roots, leaves and siliques; and undetectable in 5-day-old seedlings. In the basal rosette leaves of 21-day-old plants, it is more abundant in leaves 6 and 7, which possess narrow elliptical laminae, than in leaves 1-4, which have round laminae, suggesting a possible correlation between its expression and the formation of elliptical leaf laminae in mature leaves.

The protein localises to the nucleus. Functionally, regulates differences in leaf patterning between juvenile and mature leaves by controlling differences in the development of primordia produced during juvenile and mature phases. Acts by activating transcription of the myb-domain protein AS1, a gene involved in leaf-axis specification. Associates with the promoter and the start of the transcribed region of AS1 and up-regulates expression of AS1 through acetylation of histones H3 and H4. The protein is Transcription factor GTE6 (GTE6) of Arabidopsis thaliana (Mouse-ear cress).